The primary structure comprises 311 residues: Cell division protein FtsQ (311 aa).

The segment at 1-28 (MTTRSPARPLIARRSTPAPTPAPHDPAP) is disordered. Residues 1–46 (MTTRSPARPLIARRSTPAPTPAPHDPAPSRLSYRVTRLWLTPIFRK) are Cytoplasmic-facing. The chain crosses the membrane as a helical span at residues 47–67 (ALHLGIPVFALFAAVTWYLGD). The Periplasmic segment spans residues 68 to 311 (ETRVAELFEA…AERPDGDTRG (244 aa)). In terms of domain architecture, POTRA spans 91 to 159 (FRVNVLGIDG…GYLAVRIDER (69 aa)).

Belongs to the FtsQ/DivIB family. FtsQ subfamily.

Its subcellular location is the cell inner membrane. Functionally, essential cell division protein. The polypeptide is Cell division protein FtsQ (Jannaschia sp. (strain CCS1)).